The sequence spans 438 residues: 3-phosphoshikimate 1-carboxyvinyltransferase (438 aa).

Residues lysine 26, serine 27, and arginine 31 each coordinate 3-phosphoshikimate. Position 26 (lysine 26) interacts with phosphoenolpyruvate. 2 residues coordinate phosphoenolpyruvate: glycine 99 and arginine 127. Positions 172, 174, 320, and 347 each coordinate 3-phosphoshikimate. Glutamine 174 contacts phosphoenolpyruvate. The Proton acceptor role is filled by aspartate 320. Residues arginine 351 and arginine 392 each contribute to the phosphoenolpyruvate site.

The protein belongs to the EPSP synthase family. As to quaternary structure, monomer.

It localises to the cytoplasm. The catalysed reaction is 3-phosphoshikimate + phosphoenolpyruvate = 5-O-(1-carboxyvinyl)-3-phosphoshikimate + phosphate. It participates in metabolic intermediate biosynthesis; chorismate biosynthesis; chorismate from D-erythrose 4-phosphate and phosphoenolpyruvate: step 6/7. Functionally, catalyzes the transfer of the enolpyruvyl moiety of phosphoenolpyruvate (PEP) to the 5-hydroxyl of shikimate-3-phosphate (S3P) to produce enolpyruvyl shikimate-3-phosphate and inorganic phosphate. The chain is 3-phosphoshikimate 1-carboxyvinyltransferase from Xanthomonas campestris pv. campestris (strain B100).